The primary structure comprises 719 residues: DNA replication licensing factor MCM7 (719 aa).

Alanine 2 carries the N-acetylalanine modification. Glycyl lysine isopeptide (Lys-Gly) (interchain with G-Cter in SUMO2) cross-links involve residues lysine 15 and lysine 28. Serine 314 carries the post-translational modification Phosphoserine. An MCM domain is found at 332-538 (FYEKLAASIA…NDLRLAQHIT (207 aa)). Tyrosine 345 contributes to the ATP binding site. Serine 365 carries the post-translational modification Phosphoserine. 5 residues coordinate ATP: glycine 384, alanine 386, lysine 387, serine 388, and asparagine 489. Serine 500 is modified (phosphoserine). Positions 513-516 (SRFD) match the Arginine finger motif. Arginine 514 contacts ATP. Residues 521 to 564 (IQDRPDRDNDLRLAQHITYVHQHSRQPPAQFEPLDMKLMRRYIA) form an interaction with RAD17 region. The segment at 577–719 (LADYITAAYV…NTSRTRITFV (143 aa)) is interaction with ATRIP. Arginine 604 is a binding site for ATP. Serine 678 carries the post-translational modification Phosphoserine.

The protein belongs to the MCM family. As to quaternary structure, component of the MCM2-7 complex. The complex forms a toroidal hexameric ring with the proposed subunit order MCM2-MCM6-MCM4-MCM7-MCM3-MCM5. Component of the CMG helicase complex, a hexameric ring of related MCM2-7 subunits stabilized by CDC45 and the tetrameric GINS complex. Interacts with the ATR-ATRIP complex and with RAD17. Interacts with TIPIN. Interacts with MCMBP. Interacts with ANKRD17. Component of the replisome complex composed of at least DONSON, MCM2, MCM7, PCNA and TICRR. Post-translationally, O-glycosylated (O-GlcNAcylated), in a cell cycle-dependent manner. Ubiquitinated by ECS(LRR1) E3 ubiquitin-protein ligase complex when forks converge following formation of DNA interstrand cross-links. During mitosis, ubiquitinated by TRAIP when forks converge following formation of DNA interstrand cross-links. Short ubiquitin chains on MCM7 promote recruitment of DNA glycosylase NEIL3. If the interstrand cross-link cannot be cleaved by NEIL3, the ubiquitin chains continue to grow on MCM7, promoting the unloading of the CMG helicase complex by the VCP/p97 ATPase.

The protein resides in the nucleus. It localises to the chromosome. The catalysed reaction is ATP + H2O = ADP + phosphate + H(+). Functionally, acts as a component of the MCM2-7 complex (MCM complex) which is the replicative helicase essential for 'once per cell cycle' DNA replication initiation and elongation in eukaryotic cells. Core component of CDC45-MCM-GINS (CMG) helicase, the molecular machine that unwinds template DNA during replication, and around which the replisome is built. The active ATPase sites in the MCM2-7 ring are formed through the interaction surfaces of two neighboring subunits such that a critical structure of a conserved arginine finger motif is provided in trans relative to the ATP-binding site of the Walker A box of the adjacent subunit. The six ATPase active sites, however, are likely to contribute differentially to the complex helicase activity. Uncomplexed form does not show ATPase or DNA helicase. Required for S-phase checkpoint activation upon UV-induced damage. The chain is DNA replication licensing factor MCM7 (Mcm7) from Mus musculus (Mouse).